The primary structure comprises 269 residues: Hydroxypyruvate/pyruvate aldolase (269 aa).

His-47 acts as the Proton acceptor in catalysis. Glu-151 and Asp-177 together coordinate a divalent metal cation.

It belongs to the HpcH/HpaI aldolase family. Requires a divalent metal cation as cofactor.

It carries out the reaction D-glyceraldehyde + 3-hydroxypyruvate = 2-dehydro-D-gluconate. The catalysed reaction is D-glyceraldehyde + 3-hydroxypyruvate = (3R,4S,5R)-3,4,5,6-tetrahydroxy-2-oxohexanoate. The enzyme catalyses D-glyceraldehyde + 3-hydroxypyruvate = 2-dehydro-D-galactonate. It catalyses the reaction D-glyceraldehyde + pyruvate = 2-dehydro-3-deoxy-L-galactonate. It carries out the reaction 2-dehydro-3-deoxy-D-gluconate = D-glyceraldehyde + pyruvate. Functionally, aldolase which can catalyze in vitro the aldolisation reaction between hydroxypyruvate (HPA) or pyruvate (PA) and D-glyceraldehyde (D-GA). The condensation of hydroxypyruvate and D-glyceraldehyde produces 2-dehydro-D-gluconate as the major product, (3R,4S,5R)-3,4,5,6-tetrahydroxy-2-oxohexanoate and 2-dehydro-D-galactonate. The condensation of pyruvate and D-glyceraldehyde produces 2-dehydro-3-deoxy-L-galactonate as the major product and 2-dehydro-3-deoxy-D-gluconate. The chain is Hydroxypyruvate/pyruvate aldolase from Cupriavidus necator (strain ATCC 17699 / DSM 428 / KCTC 22496 / NCIMB 10442 / H16 / Stanier 337) (Ralstonia eutropha).